Here is a 200-residue protein sequence, read N- to C-terminus: Prostamide/prostaglandin F synthase (200 aa).

This sequence belongs to the peroxiredoxin-like PRXL2 family. Prostamide/prostaglandin F synthase subfamily.

It is found in the cytoplasm. It localises to the cytosol. It carries out the reaction prostaglandin H2 + [thioredoxin]-dithiol = prostaglandin F2alpha + [thioredoxin]-disulfide. It catalyses the reaction prostamide F2alpha + [thioredoxin]-disulfide = prostamide H2 + [thioredoxin]-dithiol. Its function is as follows. Catalyzes the reduction of prostaglandin-ethanolamide H(2) (prostamide H(2)) to prostamide F(2alpha) with NADPH as proton donor. Also able to reduce prostaglandin H(2) to prostaglandin F(2alpha). The chain is Prostamide/prostaglandin F synthase (prxl2b) from Salmo salar (Atlantic salmon).